We begin with the raw amino-acid sequence, 394 residues long: Acryloyl-CoA reductase (NADH) (394 aa).

FAD is bound by residues 135–144 (FALTEPNAGS) and 170–172 (FIS). S144 lines the substrate pocket. 254–257 (DGAR) lines the substrate pocket. FAD-binding positions include R282, Q293, and 350-354 (QIHGG). Catalysis depends on E377, which acts as the Proton acceptor. G378 lines the substrate pocket. 379 to 381 (TSE) is an FAD binding site.

Heterohexadecamer; tetramer of tetramers. Each tetramer is composed of 2 alpha (AcrC), a beta (AcrA) and a gamma (AcrB) subunit. FAD serves as cofactor.

Its subcellular location is the cytoplasm. It carries out the reaction propanoyl-CoA + NAD(+) = acryloyl-CoA + NADH + H(+). Its function is as follows. Probable catalytic subunit of the acryloyl-CoA reductase complex involved in the pathway of L-alanine fermentation. Catalyzes the irreversible NADH-dependent formation of propionyl-CoA from acryloyl-CoA. It can also use 3-buten-2-one as substrate. The chain is Acryloyl-CoA reductase (NADH) (acrC) from Anaerotignum propionicum (Clostridium propionicum).